The primary structure comprises 369 residues: Allantoicase (369 aa).

The interval 341 to 369 is disordered; it reads PDSKNNNNNNNNNNNNNTSNSFKTSDRQQ. A compositionally biased stretch (low complexity) spans 345–357; it reads NNNNNNNNNNNNN.

Belongs to the allantoicase family.

The catalysed reaction is allantoate + H2O = (S)-ureidoglycolate + urea. It functions in the pathway nitrogen metabolism; (S)-allantoin degradation; (S)-ureidoglycolate from allantoate (aminidohydrolase route): step 1/1. Its function is as follows. Utilization of purines as secondary nitrogen sources, when primary sources are limiting. This chain is Allantoicase (allC), found in Dictyostelium discoideum (Social amoeba).